The chain runs to 404 residues: Spore development regulator RYP2 (404 aa).

Disordered stretches follow at residues 1-46 (MSAP…RKAV), 200-231 (LLKR…SSQQ), and 382-404 (SGQS…PAWG). The region spanning 17-194 (LQSADFRLTV…ADQGVKLRIR (178 aa)) is the Velvet domain. Basic and acidic residues predominate over residues 29 to 46 (NPERARVAGGKEKERKAV). A compositionally biased stretch (polar residues) spans 382–397 (SGQSFSQSAGHMQSPS).

It belongs to the velvet family. VosA subfamily. Forms a heterodimeric complex with RYP3; the formation of the RYP2-RYP3 complex is light-dependent.

It localises to the nucleus. Functionally, component of the RYP2-RYP3 heterodimeric complex that plays a dual role in activating genes associated with spore maturation and repressing certain development-associated genes. The complex binds DNA through the DNA-binding domain of vosA that recognizes an 11-nucleotide consensus sequence 5'-CTGGCCGCGGC-3' consisting of two motifs in the promoters of key developmental regulatory genes. Required for viable spore production and regulation of sporulation in response to temperature and for the switch to yeast-form in the presence of host cells. The sequence is that of Spore development regulator RYP2 from Ajellomyces capsulatus (Darling's disease fungus).